The chain runs to 431 residues: Tol-Pal system protein TolB (431 aa).

The first 19 residues, Met-1 to Ser-19, serve as a signal peptide directing secretion.

Belongs to the TolB family. As to quaternary structure, the Tol-Pal system is composed of five core proteins: the inner membrane proteins TolA, TolQ and TolR, the periplasmic protein TolB and the outer membrane protein Pal. They form a network linking the inner and outer membranes and the peptidoglycan layer.

The protein resides in the periplasm. In terms of biological role, part of the Tol-Pal system, which plays a role in outer membrane invagination during cell division and is important for maintaining outer membrane integrity. TolB occupies a key intermediary position in the Tol-Pal system because it communicates directly with both membrane-embedded components, Pal in the outer membrane and TolA in the inner membrane. In Wigglesworthia glossinidia brevipalpis, this protein is Tol-Pal system protein TolB.